A 332-amino-acid polypeptide reads, in one-letter code: Flotillin-like protein FloA (332 aa).

Helical transmembrane passes span 6–26 (LGYLILTFVVLLLLVLFFSFV) and 28–48 (VGLWISAAAADVRVGIFYMIG).

It belongs to the flotillin-like FloA family. Homooligomerizes.

It localises to the cell membrane. The protein localises to the membrane raft. Functionally, found in functional membrane microdomains (FMM) that may be equivalent to eukaryotic membrane rafts. FMMs are highly dynamic and increase in number as cells age. Flotillins are thought to be important factors in membrane fluidity. This Symbiobacterium thermophilum (strain DSM 24528 / JCM 14929 / IAM 14863 / T) protein is Flotillin-like protein FloA.